Consider the following 136-residue polypeptide: Large ribosomal subunit protein uL16 (136 aa).

The protein belongs to the universal ribosomal protein uL16 family. In terms of assembly, part of the 50S ribosomal subunit.

In terms of biological role, binds 23S rRNA and is also seen to make contacts with the A and possibly P site tRNAs. In Rickettsia rickettsii (strain Iowa), this protein is Large ribosomal subunit protein uL16.